A 251-amino-acid polypeptide reads, in one-letter code: Vacuolar protein sorting-associated protein 37D (251 aa).

In terms of domain architecture, VPS37 C-terminal spans 93 to 182 (AENCADKLQR…RRRERSAQPA (90 aa)). The segment at 174–251 (RRERSAQPAP…RPSQPEPPHR (78 aa)) is disordered. Over residues 221 to 251 (PVPPLKGSPGCPLGPAPLLSPRPSQPEPPHR) the composition is skewed to pro residues.

Belongs to the VPS37 family. As to quaternary structure, component of the ESCRT-I complex (endosomal sorting complex required for transport I) which consists of TSG101, VPS28, a VPS37 protein (VPS37A to -D) and MVB12A or MVB12B in a 1:1:1:1 stoichiometry. Interacts with TSG101 and MVB12A. Component of the ESCRT-I complex (endosomal sorting complex required for transport I) which consists of TSG101, VPS28, a VPS37 protein (VPS37A to -D) and UBAP1 in a 1:1:1:1 stoichiometry.

It is found in the late endosome membrane. Its function is as follows. Component of the ESCRT-I complex, a regulator of vesicular trafficking process. Required for the sorting of endocytic ubiquitinated cargos into multivesicular bodies. May be involved in cell growth and differentiation. The protein is Vacuolar protein sorting-associated protein 37D of Homo sapiens (Human).